Consider the following 436-residue polypeptide: Acrosin (436 aa).

An N-terminal signal peptide occupies residues 1–19 (MVEMLPTVAVLVLAVSVVA). Residue Asn22 is glycosylated (N-linked (GlcNAc...) asparagine). Cystine bridges form between Cys25–Cys155, Cys29–Cys163, Cys74–Cys90, Cys178–Cys247, Cys210–Cys226, and Cys237–Cys267. One can recognise a Peptidase S1 domain in the interval 43-291 (IVSGQSAQLG…YLDWIASKIG (249 aa)). Catalysis depends on charge relay system residues His89 and Asp143. N-linked (GlcNAc...) asparagine glycosylation is present at Asn211. The active-site Charge relay system is Ser241. Residues 346 to 436 (PSSTQTSSSL…NKPSEPFLHS (91 aa)) constitute a propeptide, pro-rich.

Belongs to the peptidase S1 family. Heavy chain (catalytic) and a light chain linked by two disulfide bonds. Forms a heterodimer with SERPINA5.

The enzyme catalyses Preferential cleavage: Arg-|-Xaa, Lys-|-Xaa.. Inhibited by SERPINA5. Functionally, acrosin is the major protease of mammalian spermatozoa. It is a serine protease of trypsin-like cleavage specificity, it is synthesized in a zymogen form, proacrosin and stored in the acrosome. This Mus musculus (Mouse) protein is Acrosin (Acr).